Reading from the N-terminus, the 199-residue chain is MESFVTPQRRSAAEQEPKPTANIENIVATVSLDQTLDLNLIERSILTVEYNPEQFPGLVYRLDSPKVTALIFKSGKMVVTGAKSTRDLIEAVKKIVRNLKKHGIQIYGRPKVQIQNIVASANLNVCVDLERAALTLENSMYEPEQFPGLIHRMDEPRVVLLIFSSGKMVITGAKREEEVYEAVNKIYEKLKKLRAIRPC.

Repeat copies occupy residues I23 to L99 and I114 to L190.

Belongs to the TBP family.

Its function is as follows. General factor that plays a role in the activation of archaeal genes transcribed by RNA polymerase. Binds specifically to the TATA box promoter element which lies close to the position of transcription initiation. The protein is TATA-box-binding protein (tbp) of Pyrodictium occultum.